The chain runs to 124 residues: Transcription initiation factor IIA subunit 2 (124 aa).

This sequence belongs to the TFIIA subunit 2 family. TFIIA is a heterodimer composed of the large TOA1 and the small TOA2 subunits.

Its subcellular location is the nucleus. TFIIA is a component of the transcription machinery of RNA polymerase II and plays an important role in transcriptional activation. TFIIA in a complex with tbp mediates transcriptional activity. The polypeptide is Transcription initiation factor IIA subunit 2 (TOA2) (Cryptococcus neoformans var. neoformans serotype D (strain JEC21 / ATCC MYA-565) (Filobasidiella neoformans)).